Reading from the N-terminus, the 122-residue chain is Large ribosomal subunit protein uL14 (122 aa).

It belongs to the universal ribosomal protein uL14 family. Part of the 50S ribosomal subunit. Forms a cluster with proteins L3 and L19. In the 70S ribosome, L14 and L19 interact and together make contacts with the 16S rRNA in bridges B5 and B8.

Binds to 23S rRNA. Forms part of two intersubunit bridges in the 70S ribosome. In Pseudomonas entomophila (strain L48), this protein is Large ribosomal subunit protein uL14.